Consider the following 509-residue polypeptide: Aldehyde dehydrogenase 1A1 (509 aa).

NAD(+)-binding positions include 175 to 178 (IPWN), 201 to 204 (KPAE), 234 to 235 (GP), 254 to 255 (GS), and 277 to 279 (ELG). Glutamate 277 serves as the catalytic Proton acceptor. Cysteine 311 functions as the Nucleophile in the catalytic mechanism. Residues 357-361 (EQFQK) and 408-410 (EIF) contribute to the NAD(+) site.

It belongs to the aldehyde dehydrogenase family. In terms of assembly, homotetramer.

It localises to the cytoplasm. It is found in the cytosol. Its subcellular location is the cell projection. The protein resides in the axon. It catalyses the reaction an aldehyde + NAD(+) + H2O = a carboxylate + NADH + 2 H(+). The catalysed reaction is all-trans-retinal + NAD(+) + H2O = all-trans-retinoate + NADH + 2 H(+). The enzyme catalyses 9-cis-retinal + NAD(+) + H2O = 9-cis-retinoate + NADH + 2 H(+). It carries out the reaction 11-cis-retinal + NAD(+) + H2O = 11-cis-retinoate + NADH + 2 H(+). It catalyses the reaction 13-cis-retinal + NAD(+) + H2O = 13-cis-retinoate + NADH + 2 H(+). The catalysed reaction is 3-deoxyglucosone + NAD(+) + H2O = 2-dehydro-3-deoxy-D-gluconate + NADH + 2 H(+). The enzyme catalyses (E)-4-hydroxynon-2-enal + NAD(+) + H2O = (E)-4-hydroxynon-2-enoate + NADH + 2 H(+). It carries out the reaction malonaldehyde + NAD(+) + H2O = 3-oxopropanoate + NADH + 2 H(+). It catalyses the reaction hexanal + NAD(+) + H2O = hexanoate + NADH + 2 H(+). The catalysed reaction is propanal + NAD(+) + H2O = propanoate + NADH + 2 H(+). The enzyme catalyses acetaldehyde + NAD(+) + H2O = acetate + NADH + 2 H(+). It carries out the reaction benzaldehyde + NAD(+) + H2O = benzoate + NADH + 2 H(+). It catalyses the reaction 4-aminobutanal + NAD(+) + H2O = 4-aminobutanoate + NADH + 2 H(+). The protein operates within cofactor metabolism; retinol metabolism. Its function is as follows. Cytosolic dehydrogenase that catalyzes the irreversible oxidation of a wide range of aldehydes to their corresponding carboxylic acid. Functions downstream of retinol dehydrogenases and catalyzes the oxidation of retinaldehyde into retinoic acid, the second step in the oxidation of retinol/vitamin A into retinoic acid. This pathway is crucial to control the levels of retinol and retinoic acid, two important molecules which excess can be teratogenic and cytotoxic. Also oxidizes aldehydes resulting from lipid peroxidation like (E)-4-hydroxynon-2-enal/HNE, malonaldehyde and hexanal that form protein adducts and are highly cytotoxic. By participating for instance to the clearance of (E)-4-hydroxynon-2-enal/HNE in the lens epithelium prevents the formation of HNE-protein adducts and lens opacification. Also functions downstream of fructosamine-3-kinase in the fructosamine degradation pathway by catalyzing the oxidation of 3-deoxyglucosone, the carbohydrate product of fructosamine 3-phosphate decomposition, which is itself a potent glycating agent that may react with lysine and arginine side-chains of proteins. Also has an aminobutyraldehyde dehydrogenase activity and is probably part of an alternative pathway for the biosynthesis of GABA/4-aminobutanoate in midbrain, thereby playing a role in GABAergic synaptic transmission. The polypeptide is Aldehyde dehydrogenase 1A1 (Gallus gallus (Chicken)).